Reading from the N-terminus, the 274-residue chain is 2,3,4,5-tetrahydropyridine-2,6-dicarboxylate N-succinyltransferase (274 aa).

Positions 107 and 144 each coordinate substrate.

The protein belongs to the transferase hexapeptide repeat family. In terms of assembly, homotrimer.

It localises to the cytoplasm. The catalysed reaction is (S)-2,3,4,5-tetrahydrodipicolinate + succinyl-CoA + H2O = (S)-2-succinylamino-6-oxoheptanedioate + CoA. It functions in the pathway amino-acid biosynthesis; L-lysine biosynthesis via DAP pathway; LL-2,6-diaminopimelate from (S)-tetrahydrodipicolinate (succinylase route): step 1/3. In Paracoccus denitrificans (strain Pd 1222), this protein is 2,3,4,5-tetrahydropyridine-2,6-dicarboxylate N-succinyltransferase.